The chain runs to 573 residues: Proline--tRNA ligase (573 aa).

The protein belongs to the class-II aminoacyl-tRNA synthetase family. ProS type 1 subfamily. In terms of assembly, homodimer.

The protein resides in the cytoplasm. The enzyme catalyses tRNA(Pro) + L-proline + ATP = L-prolyl-tRNA(Pro) + AMP + diphosphate. Its function is as follows. Catalyzes the attachment of proline to tRNA(Pro) in a two-step reaction: proline is first activated by ATP to form Pro-AMP and then transferred to the acceptor end of tRNA(Pro). As ProRS can inadvertently accommodate and process non-cognate amino acids such as alanine and cysteine, to avoid such errors it has two additional distinct editing activities against alanine. One activity is designated as 'pretransfer' editing and involves the tRNA(Pro)-independent hydrolysis of activated Ala-AMP. The other activity is designated 'posttransfer' editing and involves deacylation of mischarged Ala-tRNA(Pro). The misacylated Cys-tRNA(Pro) is not edited by ProRS. The polypeptide is Proline--tRNA ligase (Chromohalobacter salexigens (strain ATCC BAA-138 / DSM 3043 / CIP 106854 / NCIMB 13768 / 1H11)).